The sequence spans 107 residues: Flagellar transcriptional regulator FlhD (107 aa).

Belongs to the FlhD family. As to quaternary structure, homodimer; disulfide-linked. Forms a heterohexamer composed of two FlhC and four FlhD subunits. Each FlhC binds a FlhD dimer, forming a heterotrimer, and a hexamer assembles by dimerization of two heterotrimers.

Its subcellular location is the cytoplasm. Functions in complex with FlhC as a master transcriptional regulator that regulates transcription of several flagellar and non-flagellar operons by binding to their promoter region. Activates expression of class 2 flagellar genes, including fliA, which is a flagellum-specific sigma factor that turns on the class 3 genes. Also regulates genes whose products function in a variety of physiological pathways. The chain is Flagellar transcriptional regulator FlhD from Bordetella avium (strain 197N).